Here is a 701-residue protein sequence, read N- to C-terminus: SH3 domain-binding protein 1 (701 aa).

Over residues 1–10 (MMKRQLHRMR) the composition is skewed to basic residues. 2 disordered regions span residues 1–23 (MMKR…RTPE) and 160–182 (SQAT…HSHT). The interaction with CGNL1 stretch occupies residues 1-275 (MMKRQLHRMR…TATHFPRVYG (275 aa)). A BAR domain is found at 17 to 262 (SLGRTPETAE…RENHGQADHS (246 aa)). S175, S241, S262, and S264 each carry phosphoserine. In terms of domain architecture, Rho-GAP spans 276–469 (VSLATHLQEL…ALIQSADTLF (194 aa)). The tract at residues 470 to 701 (PGDINFNVSG…RPRSLASETN (232 aa)) is interaction with CD2AP. The interval 496-701 (SEELPSTAVP…RPRSLASETN (206 aa)) is disordered. The span at 508-522 (ATTPAPAPAPAPAPA) shows a compositional bias: pro residues. 2 positions are modified to phosphoserine: S544 and S550. Pro residues-rich tracts occupy residues 570–579 (PARPTMPPPQ) and 587–596 (PPAPPLPPGS). T601 bears the Phosphothreonine mark. The SH3-binding signature appears at 616–625 (APTVPPPLPP). 2 stretches are compositionally biased toward pro residues: residues 618–630 (TVPP…PPQP) and 641–652 (SPSPASPGPASP). Phosphothreonine is present on T626. At S653 the chain carries Phosphoserine. Low complexity predominate over residues 666-677 (GAATAEGGAPEA). A compositionally biased stretch (pro residues) spans 682-692 (PTPPAIPPQPR).

Interacts with RAC1. Interacts with the exocyst via EXOC4 and EXOC8; required for the localization of both SH3BP1 and the exocyst to the leading edge of migrating cells. Interacts with CD2AP and CGNL1; probably part of a complex at cell junctions. Interacts with CAPZA1; recruits CAPZA1 to forming cell junctions. May interact with AFDN. Interacts with PLXND1; they dissociate upon SEMA3E binding to PLXND1 allowing SH3BP1 to transduce downstream signal through RAC1 inactivation. Interacts with ABL1, GRB2 and SRC (via SH3 domain).

It is found in the cell projection. Its subcellular location is the cell junction. It localises to the tight junction. The protein resides in the adherens junction. The protein localises to the phagocytic cup. It is found in the nucleus. Its subcellular location is the cytoplasm. It localises to the cytosol. Its function is as follows. GTPase activating protein (GAP) which specifically converts GTP-bound Rho-type GTPases including RAC1 and CDC42 in their inactive GDP-bound form. By specifically inactivating RAC1 at the leading edge of migrating cells, it regulates the spatiotemporal organization of cell protrusions which is important for proper cell migration. Also negatively regulates CDC42 in the process of actin remodeling and the formation of epithelial cell junctions. Through its GAP activity toward RAC1 and/or CDC42 plays a specific role in phagocytosis of large particles. Specifically recruited by a PI3 kinase/PI3K-dependent mechanism to sites of large particles engagement, inactivates RAC1 and/or CDC42 allowing the reorganization of the underlying actin cytoskeleton required for engulfment. It also plays a role in angiogenesis and the process of repulsive guidance as part of a semaphorin-plexin signaling pathway. Following the binding of PLXND1 to extracellular SEMA3E it dissociates from PLXND1 and inactivates RAC1, inducing the intracellular reorganization of the actin cytoskeleton and the collapse of cells. The polypeptide is SH3 domain-binding protein 1 (Homo sapiens (Human)).